A 294-amino-acid chain; its full sequence is MKTKVIVVIGPTAVGKTALGIDLAQRYNGEIISGDSQQVYRKLDIGTAKASPEEQAAAVHHLIDVRDVTEGYSAYEFVAEAKALIADIKSRGKLPIIVGGTGLYIQSLLEGYHLGGLVDQEQVLAYRAELDCLSDEDLETMAEQAGLMVEGNSRRRIIRGLELKKFGENLENTESGYEPLYICLTDDRQVLYDRINQRVDKMMAAGLLDEVSWLYQEHPEAQAAMGIGYKEFFPYLEGQISLKEAIDNVKQNSRRFAKRQLTWFRNRMAVDFYQVSEEAVKDRIYTAVEEFLDD.

Position 10–17 (10–17 (GPTAVGKT)) interacts with ATP. 12–17 (TAVGKT) contacts substrate. The interval 35-38 (DSQQ) is interaction with substrate tRNA.

The protein belongs to the IPP transferase family. In terms of assembly, monomer. Requires Mg(2+) as cofactor.

It catalyses the reaction adenosine(37) in tRNA + dimethylallyl diphosphate = N(6)-dimethylallyladenosine(37) in tRNA + diphosphate. Its function is as follows. Catalyzes the transfer of a dimethylallyl group onto the adenine at position 37 in tRNAs that read codons beginning with uridine, leading to the formation of N6-(dimethylallyl)adenosine (i(6)A). The protein is tRNA dimethylallyltransferase of Streptococcus suis (strain 98HAH33).